The primary structure comprises 223 residues: Putative germin-like protein 2-3 (223 aa).

The signal sequence occupies residues 1-28 (MAAIRASFLLAAAALLALWCSDHGGVVA). C38 and C53 are disulfide-bonded. One can recognise a Cupin type-1 domain in the interval 67–217 (SGLHMAGNTT…AFQVEKTVVD (151 aa)). N74 carries an N-linked (GlcNAc...) asparagine glycan. Residues H115, H117, E122, and H163 each coordinate Mn(2+).

This sequence belongs to the germin family. In terms of assembly, oligomer (believed to be a pentamer but probably hexamer).

The protein localises to the secreted. It is found in the extracellular space. It localises to the apoplast. Its function is as follows. May play a role in plant defense. Probably has no oxalate oxidase activity even if the active site is conserved. The protein is Putative germin-like protein 2-3 of Oryza sativa subsp. japonica (Rice).